The chain runs to 31 residues: Cytochrome b6-f complex subunit 6 (31 aa).

The chain crosses the membrane as a helical span at residues 4 to 24; the sequence is ITSYFGFLLAALTITSVLFIG.

It belongs to the PetL family. The 4 large subunits of the cytochrome b6-f complex are cytochrome b6, subunit IV (17 kDa polypeptide, PetD), cytochrome f and the Rieske protein, while the 4 small subunits are PetG, PetL, PetM and PetN. The complex functions as a dimer.

The protein resides in the plastid. The protein localises to the chloroplast thylakoid membrane. Functionally, component of the cytochrome b6-f complex, which mediates electron transfer between photosystem II (PSII) and photosystem I (PSI), cyclic electron flow around PSI, and state transitions. PetL is important for photoautotrophic growth as well as for electron transfer efficiency and stability of the cytochrome b6-f complex. The chain is Cytochrome b6-f complex subunit 6 from Arabidopsis thaliana (Mouse-ear cress).